The sequence spans 316 residues: Thymidylate synthase (316 aa).

DUMP contacts are provided by residues Arg-23 and 178-179; that span reads RR. The Nucleophile role is filled by Cys-198. DUMP is bound by residues 218–221, Asn-229, and 259–261; these read RSGD and HIY. Residue Asp-221 participates in (6R)-5,10-methylene-5,6,7,8-tetrahydrofolate binding. Ala-315 provides a ligand contact to (6R)-5,10-methylene-5,6,7,8-tetrahydrofolate.

Belongs to the thymidylate synthase family. Bacterial-type ThyA subfamily. In terms of assembly, homodimer.

It localises to the cytoplasm. The enzyme catalyses dUMP + (6R)-5,10-methylene-5,6,7,8-tetrahydrofolate = 7,8-dihydrofolate + dTMP. The protein operates within pyrimidine metabolism; dTTP biosynthesis. In terms of biological role, catalyzes the reductive methylation of 2'-deoxyuridine-5'-monophosphate (dUMP) to 2'-deoxythymidine-5'-monophosphate (dTMP) while utilizing 5,10-methylenetetrahydrofolate (mTHF) as the methyl donor and reductant in the reaction, yielding dihydrofolate (DHF) as a by-product. This enzymatic reaction provides an intracellular de novo source of dTMP, an essential precursor for DNA biosynthesis. This chain is Thymidylate synthase, found in Lactiplantibacillus plantarum (strain ATCC BAA-793 / NCIMB 8826 / WCFS1) (Lactobacillus plantarum).